The following is a 457-amino-acid chain: Glycine receptor subunit alpha-1 (457 aa).

The first 28 residues, 1–28 (MYSFNTLRLYLWETIVFFSLAASKEAEA), serve as a signal peptide directing secretion. The Extracellular portion of the chain corresponds to 29–250 (ARSASKPMSP…RFHLERQMGY (222 aa)). The N-linked (GlcNAc...) asparagine glycan is linked to Asn-66. Residues Arg-93 and Ser-157 each coordinate glycine. Cys-166 and Cys-180 are oxidised to a cystine. The Zn(2+) site is built by Glu-220 and Asp-222. Cys-226 and Cys-237 form a disulfide bridge. 230 to 235 (YNTGKF) contacts strychnine. Thr-232 provides a ligand contact to glycine. His-243 contributes to the Zn(2+) binding site. A helical membrane pass occupies residues 251–272 (YLIQMYIPSLLIVILSWISFWI). At 273–277 (NMDAA) the chain is on the cytoplasmic side. The chain crosses the membrane as a helical span at residues 278–298 (PARVGLGITTVLTMTTQSSGS). Over 299 to 309 (RASLPKVSYVK) the chain is Extracellular. Residues 310 to 330 (AIDIWMAVCLLFVFSALLEYA) form a helical membrane-spanning segment. The Cytoplasmic segment spans residues 331 to 425 (AVNFVSRQHK…FIQRAKKIDK (95 aa)). A disordered region spans residues 391-410 (KGANNSNTTNPPPAPSKSPE). Residues 426–446 (ISRIGFPMAFLIFNMFYWIIY) traverse the membrane as a helical segment. Over 447-457 (KIVRREDVHNQ) the chain is Extracellular.

Belongs to the ligand-gated ion channel (TC 1.A.9) family. Glycine receptor (TC 1.A.9.3) subfamily. GLRA1 sub-subfamily. In terms of assembly, interacts with GLRB to form heteropentameric channels; this is probably the predominant form in vivo. Heteropentamer composed of four GLRA1 subunits and one GLRB subunit. Heteropentamer composed of two GLRA1 and three GLRB. Heteropentamer composed of three GLRA1 and two GLRB. Homopentamer (in vitro). Both homopentamers and heteropentamers form functional ion channels, but their characteristics are subtly different. In terms of tissue distribution, detected on spinal cord neurons (at protein level). Detected in spinal cord.

It localises to the postsynaptic cell membrane. Its subcellular location is the synapse. The protein resides in the perikaryon. The protein localises to the cell projection. It is found in the dendrite. It localises to the cell membrane. The enzyme catalyses chloride(in) = chloride(out). Its activity is regulated as follows. Channel opening is triggered by extracellular glycine. Channel characteristics depend on the subunit composition; heteropentameric channels are activated by lower glycine levels and display faster desensitization. Its function is as follows. Subunit of heteromeric glycine-gated chloride channels. Plays an important role in the down-regulation of neuronal excitability. Contributes to the generation of inhibitory postsynaptic currents. Channel activity is potentiated by ethanol. Potentiation of channel activity by intoxicating levels of ethanol contribute to the sedative effects of ethanol. In Bos taurus (Bovine), this protein is Glycine receptor subunit alpha-1 (GLRA1).